A 71-amino-acid polypeptide reads, in one-letter code: UPF0346 protein BCQ_2236 (71 aa).

This sequence belongs to the UPF0346 family.

The sequence is that of UPF0346 protein BCQ_2236 from Bacillus cereus (strain Q1).